A 170-amino-acid polypeptide reads, in one-letter code: Acireductone dioxygenase (170 aa).

Residues His99, His101, Glu105, and His144 each coordinate Fe(2+). Ni(2+) is bound by residues His99, His101, Glu105, and His144.

Belongs to the acireductone dioxygenase (ARD) family. As to quaternary structure, monomer. Fe(2+) is required as a cofactor. It depends on Ni(2+) as a cofactor.

It catalyses the reaction 1,2-dihydroxy-5-(methylsulfanyl)pent-1-en-3-one + O2 = 3-(methylsulfanyl)propanoate + CO + formate + 2 H(+). The catalysed reaction is 1,2-dihydroxy-5-(methylsulfanyl)pent-1-en-3-one + O2 = 4-methylsulfanyl-2-oxobutanoate + formate + 2 H(+). It functions in the pathway amino-acid biosynthesis; L-methionine biosynthesis via salvage pathway; L-methionine from S-methyl-5-thio-alpha-D-ribose 1-phosphate: step 5/6. Catalyzes 2 different reactions between oxygen and the acireductone 1,2-dihydroxy-3-keto-5-methylthiopentene (DHK-MTPene) depending upon the metal bound in the active site. Fe-containing acireductone dioxygenase (Fe-ARD) produces formate and 2-keto-4-methylthiobutyrate (KMTB), the alpha-ketoacid precursor of methionine in the methionine recycle pathway. Ni-containing acireductone dioxygenase (Ni-ARD) produces methylthiopropionate, carbon monoxide and formate, and does not lie on the methionine recycle pathway. The chain is Acireductone dioxygenase from Bacillus thuringiensis subsp. konkukian (strain 97-27).